The sequence spans 94 residues: Conotoxin Cal22a (94 aa).

An N-terminal signal peptide occupies residues 1–24 (MMSTKGITLFLCLLLLALATSVNG). Residues 25–44 (GQGTRRSRMTRALHGGRPSA) constitute a propeptide that is removed on maturation.

In terms of processing, contains 4 disulfide bonds. As to expression, expressed by the venom duct.

It localises to the secreted. In terms of biological role, probable neurotoxin with unknown target. Possibly targets ion channels. The polypeptide is Conotoxin Cal22a (Californiconus californicus (California cone)).